The following is a 530-amino-acid chain: Hyccin 2 (530 aa).

Phosphothreonine is present on residues Thr30 and Thr306. A phosphoserine mark is found at Ser321 and Ser341. The segment at 328–410 is disordered; sequence RREGAEGVNG…DSVVRKQYVQ (83 aa). Over residues 353-373 the composition is skewed to polar residues; the sequence is SGASLSSQPIGTKPSSSSQRG. 4 positions are modified to phosphoserine: Ser430, Ser442, Ser444, and Ser491. Residues 498–530 form a disordered region; it reads GQAGEGKELLSPGAPLTKQSRSPSFNMQLISQV. A compositionally biased stretch (polar residues) spans 514–530; sequence TKQSRSPSFNMQLISQV.

It belongs to the Hyccin family. Component of a phosphatidylinositol 4-kinase (PI4K) complex, composed of PI4KA, EFR3 (EFR3A or EFR3B), TTC7 (TTC7A or TTC7B) and HYCC (HYCC1 or HYCC2).

The protein resides in the cytoplasm. It is found in the cytosol. It localises to the cell membrane. In terms of biological role, component of a complex required to localize phosphatidylinositol 4-kinase (PI4K) to the plasma membrane. The protein is Hyccin 2 (HYCC2) of Pongo abelii (Sumatran orangutan).